The primary structure comprises 381 residues: 3-isopropylmalate dehydrogenase (381 aa).

4 residues coordinate substrate: R104, R114, R142, and D232. 3 residues coordinate Mg(2+): D232, D256, and D260. NAD(+) is bound at residue 290-302; it reads GSAPDIAGQDKAN.

It belongs to the isocitrate and isopropylmalate dehydrogenases family. LeuB type 1 subfamily. Homodimer. Requires Mg(2+) as cofactor. It depends on Mn(2+) as a cofactor.

It is found in the cytoplasm. It carries out the reaction (2R,3S)-3-isopropylmalate + NAD(+) = 4-methyl-2-oxopentanoate + CO2 + NADH. It participates in amino-acid biosynthesis; L-leucine biosynthesis; L-leucine from 3-methyl-2-oxobutanoate: step 3/4. Functionally, catalyzes the oxidation of 3-carboxy-2-hydroxy-4-methylpentanoate (3-isopropylmalate) to 3-carboxy-4-methyl-2-oxopentanoate. The product decarboxylates to 4-methyl-2 oxopentanoate. The chain is 3-isopropylmalate dehydrogenase from Synechococcus sp. (strain JA-3-3Ab) (Cyanobacteria bacterium Yellowstone A-Prime).